The following is a 353-amino-acid chain: MSKNKLSKGQQRRVNANHQRRLKTTAEKADYDDNLFGETSEGIVISRFGMHADVESADGSVHRCNIRRTIRSLVTGDRVVWRPGKDAADGVNVKGIVEAVHERASVLTRPDFYDGVKPIAANIDQIVVVSAILPELSLNIIDRYLVACEAQDIEPLIVLNKIDLLDDDGLRFVNEQMDIYRNIGYRVLMVSSRTQDGLKPLEAALTDRISIFAGQSGVGKSSLLNALLGLNEDQILTNDVSDVSGLGQHTTTAARLYHFPHGGDVIDSPGVREFGLWHLEAEQITHGFVEFHDYLGHCKYRDCKHDNDPGCALREAVENGKIAESRFENYHRILESMEQVQVKTRKNFSSSDD.

The segment covering Met-1–Asn-17 has biased composition (polar residues). The disordered stretch occupies residues Met-1–Thr-25. The 171-residue stretch at Ala-104 to Phe-274 folds into the CP-type G domain. GTP contacts are provided by residues Asn-160–Asp-163 and Gly-214–Ser-222. Cys-298, Cys-303, His-305, and Cys-311 together coordinate Zn(2+).

It belongs to the TRAFAC class YlqF/YawG GTPase family. RsgA subfamily. Monomer. Associates with 30S ribosomal subunit, binds 16S rRNA. The cofactor is Zn(2+).

The protein localises to the cytoplasm. Its function is as follows. One of several proteins that assist in the late maturation steps of the functional core of the 30S ribosomal subunit. Helps release RbfA from mature subunits. May play a role in the assembly of ribosomal proteins into the subunit. Circularly permuted GTPase that catalyzes slow GTP hydrolysis, GTPase activity is stimulated by the 30S ribosomal subunit. This is Small ribosomal subunit biogenesis GTPase RsgA from Klebsiella pneumoniae (strain 342).